Reading from the N-terminus, the 390-residue chain is GTPase Obg (390 aa).

In terms of domain architecture, Obg spans 1–159 (MKFVDEASIL…RDLLLELMLL (159 aa)). A disordered region spans residues 127 to 147 (NTRFKSSVNRTPRQKTNGTPG). A compositionally biased stretch (polar residues) spans 129-145 (RFKSSVNRTPRQKTNGT). An OBG-type G domain is found at 160-333 (ADVGMLGMPN…LCWDVMTFII (174 aa)). GTP contacts are provided by residues 166-173 (GMPNAGKS), 191-195 (FTTLV), 213-216 (DIPG), 283-286 (NKID), and 314-316 (SAA). Residues Ser-173 and Thr-193 each coordinate Mg(2+).

It belongs to the TRAFAC class OBG-HflX-like GTPase superfamily. OBG GTPase family. In terms of assembly, monomer. The cofactor is Mg(2+).

It localises to the cytoplasm. In terms of biological role, an essential GTPase which binds GTP, GDP and possibly (p)ppGpp with moderate affinity, with high nucleotide exchange rates and a fairly low GTP hydrolysis rate. Plays a role in control of the cell cycle, stress response, ribosome biogenesis and in those bacteria that undergo differentiation, in morphogenesis control. The polypeptide is GTPase Obg (Salmonella paratyphi A (strain ATCC 9150 / SARB42)).